The primary structure comprises 247 residues: tRNA pseudouridine synthase A (247 aa).

The active-site Nucleophile is aspartate 52. Tyrosine 113 serves as a coordination point for substrate.

The protein belongs to the tRNA pseudouridine synthase TruA family. Homodimer.

The enzyme catalyses uridine(38/39/40) in tRNA = pseudouridine(38/39/40) in tRNA. Functionally, formation of pseudouridine at positions 38, 39 and 40 in the anticodon stem and loop of transfer RNAs. The sequence is that of tRNA pseudouridine synthase A from Bartonella quintana (strain Toulouse) (Rochalimaea quintana).